Here is a 315-residue protein sequence, read N- to C-terminus: Methionyl-tRNA formyltransferase (315 aa).

Ser-113–Pro-116 contributes to the (6S)-5,6,7,8-tetrahydrofolate binding site.

This sequence belongs to the Fmt family.

It carries out the reaction L-methionyl-tRNA(fMet) + (6R)-10-formyltetrahydrofolate = N-formyl-L-methionyl-tRNA(fMet) + (6S)-5,6,7,8-tetrahydrofolate + H(+). Functionally, attaches a formyl group to the free amino group of methionyl-tRNA(fMet). The formyl group appears to play a dual role in the initiator identity of N-formylmethionyl-tRNA by promoting its recognition by IF2 and preventing the misappropriation of this tRNA by the elongation apparatus. The protein is Methionyl-tRNA formyltransferase of Pectobacterium carotovorum subsp. carotovorum (strain PC1).